Reading from the N-terminus, the 185-residue chain is ATP-dependent protease subunit HslV (185 aa).

Thr12 is a catalytic residue. Na(+) contacts are provided by Ser168, Cys171, and Thr174.

The protein belongs to the peptidase T1B family. HslV subfamily. In terms of assembly, a double ring-shaped homohexamer of HslV is capped on each side by a ring-shaped HslU homohexamer. The assembly of the HslU/HslV complex is dependent on binding of ATP.

Its subcellular location is the cytoplasm. It catalyses the reaction ATP-dependent cleavage of peptide bonds with broad specificity.. Its activity is regulated as follows. Allosterically activated by HslU binding. Its function is as follows. Protease subunit of a proteasome-like degradation complex believed to be a general protein degrading machinery. This chain is ATP-dependent protease subunit HslV, found in Jannaschia sp. (strain CCS1).